A 144-amino-acid polypeptide reads, in one-letter code: Large ribosomal subunit protein uL15 (144 aa).

The tract at residues 1-52 is disordered; sequence MYLNTISPMKKSNHSSKRKGRGIGSGKGKTSGRGHKGQRSRSGGKVRRGFEG. Basic residues-rich tracts occupy residues 11-21 and 30-47; these read KSNHSSKRKGR and TSGR…GKVR.

This sequence belongs to the universal ribosomal protein uL15 family. Part of the 50S ribosomal subunit.

Its function is as follows. Binds to the 23S rRNA. The sequence is that of Large ribosomal subunit protein uL15 from Wigglesworthia glossinidia brevipalpis.